The sequence spans 312 residues: Glutathione synthetase (312 aa).

An ATP-grasp domain is found at 125 to 309 (KIFVTEFPDL…IAALFWDAVE (185 aa)). An ATP-binding site is contributed by 151–207 (RREFGDIILKPLYGNGGAGVFHLADGDRNLTSLLEMFGQLFREPFIAQRYLKDVRAG). Mg(2+) contacts are provided by glutamate 280 and asparagine 282.

Belongs to the prokaryotic GSH synthase family. Requires Mg(2+) as cofactor. Mn(2+) is required as a cofactor.

It carries out the reaction gamma-L-glutamyl-L-cysteine + glycine + ATP = glutathione + ADP + phosphate + H(+). It functions in the pathway sulfur metabolism; glutathione biosynthesis; glutathione from L-cysteine and L-glutamate: step 2/2. In Brucella melitensis biotype 1 (strain ATCC 23456 / CCUG 17765 / NCTC 10094 / 16M), this protein is Glutathione synthetase.